The primary structure comprises 170 residues: Photosystem II extrinsic protein V (170 aa).

Residues 1-33 (MASFFSTLRRSLNRLLIALPVLLGLMISTPAQA) form the signal peptide. Heme c-binding residues include C70, C73, H74, and H125.

This sequence belongs to the cytochrome c family. PsbV subfamily. As to quaternary structure, PSII is composed of 1 copy each of membrane proteins PsbA, PsbB, PsbC, PsbD, PsbE, PsbF, PsbH, PsbI, PsbJ, PsbK, PsbL, PsbM, PsbT, PsbX, PsbY, PsbZ, Psb30/Ycf12, peripheral proteins PsbO, CyanoQ (PsbQ), PsbU, PsbV and a large number of cofactors. It forms dimeric complexes. It depends on heme c as a cofactor.

Its subcellular location is the cellular thylakoid membrane. In terms of biological role, one of the extrinsic, lumenal subunits of photosystem II (PSII). PSII is a light-driven water plastoquinone oxidoreductase, using light energy to abstract electrons from H(2)O, generating a proton gradient subsequently used for ATP formation. The extrinsic proteins stabilize the structure of photosystem II oxygen-evolving complex (OEC), the ion environment of oxygen evolution and protect the OEC against heat-induced inactivation. Low-potential cytochrome c that plays a role in the OEC of PSII. The chain is Photosystem II extrinsic protein V from Synechococcus sp. (strain CC9311).